A 153-amino-acid polypeptide reads, in one-letter code: Pheromone-binding protein Gp-9 (153 aa).

A signal peptide spans 1 to 19; it reads MKTFVLHIFIFALVAFASA. Intrachain disulfides connect Cys37–Cys77, Cys73–Cys129, and Cys118–Cys138.

The protein belongs to the PBP/GOBP family. Homodimer.

It localises to the secreted. Colony queen number, a major feature of social organization, is associated with worker genotype for Gp-9. Colonies are headed by either a single reproductive queen (monogyne form) or multiple queens (polygyne form). Differences in worker Gp-9 genotypes between social forms may cause differences in workers' abilities to recognize queens and regulate their numbers. The sequence is that of Pheromone-binding protein Gp-9 from Solenopsis tridens (Fire ant).